A 451-amino-acid chain; its full sequence is Protein tweety homolog 1-B (451 aa).

At 1-43 (MSTSHGYRASWWTYILHQVPHTNFQFEVVDNQFAPQEWSYQQA) the chain is on the extracellular side. A helical transmembrane segment spans residues 44–64 (LLFLASIAGLCLAISLVLICV). Over 65-86 (YLIKFCCCASQEDDDSKSHRVC) the chain is Cytoplasmic. The chain crosses the membrane as a helical span at residues 87-107 (CVTWSCVAAVIICCAGIGIGF). Over 108 to 214 (YGNSETNDGV…QVNFIEDYRW (107 aa)) the chain is Extracellular. The N-linked (GlcNAc...) asparagine glycan is linked to Asn128. The helical transmembrane segment at 215 to 235 (LAYILLLLLDLIICLFTLLSL) threads the bilayer. The Cytoplasmic portion of the chain corresponds to 236–240 (AKQIK). Residues 241-261 (WLVIVMTVVSFFVLLLSWGSM) traverse the membrane as a helical segment. Over 262-390 (GLEMATAVGL…LKGLCYDGME (129 aa)) the chain is Extracellular. Cystine bridges form between Cys275–Cys385 and Cys303–Cys370. N-linked (GlcNAc...) asparagine glycosylation is found at Asn284 and Asn355. The chain crosses the membrane as a helical span at residues 391–411 (GILFLLLFSFLSALSFTAAVC). The Cytoplasmic portion of the chain corresponds to 412-451 (SLPRAWKRFRNRDLDYDDMDEDDPFNPQESKRFVQWQSSI).

Belongs to the tweety family. As to quaternary structure, homotetramer; disulfide-linked. Homodimer.

It localises to the cell membrane. It catalyses the reaction chloride(in) = chloride(out). It carries out the reaction L-glutamate(out) = L-glutamate(in). Functionally, may act as a calcium-independent, swelling-dependent volume-regulated anion channel (VRAC-swell) which plays a pivotal role in the process of regulatory volume decrease (RVD) in the brain through the efflux of anions like chloride and organic osmolytes like glutamate. The polypeptide is Protein tweety homolog 1-B (ttyh1-b) (Xenopus laevis (African clawed frog)).